The primary structure comprises 455 residues: GTPase Der (455 aa).

EngA-type G domains follow at residues 4 to 169 (PVVA…PPKD) and 178 to 353 (IQMS…EQHR). GTP-binding positions include 10–17 (GRPNVGKS), 57–61 (DTGGL), 120–123 (NKCE), 184–191 (GRPNVGKS), 231–235 (DTAGI), and 296–299 (NKWD). One can recognise a KH-like domain in the interval 354 to 439 (RRVTTSVVNE…PLKLFWRGKQ (86 aa)).

Belongs to the TRAFAC class TrmE-Era-EngA-EngB-Septin-like GTPase superfamily. EngA (Der) GTPase family. Associates with the 50S ribosomal subunit.

Its function is as follows. GTPase that plays an essential role in the late steps of ribosome biogenesis. This chain is GTPase Der, found in Synechococcus sp. (strain CC9902).